The primary structure comprises 234 residues: Leucyl/phenylalanyl-tRNA--protein transferase (234 aa).

The protein belongs to the L/F-transferase family.

Its subcellular location is the cytoplasm. The enzyme catalyses N-terminal L-lysyl-[protein] + L-leucyl-tRNA(Leu) = N-terminal L-leucyl-L-lysyl-[protein] + tRNA(Leu) + H(+). It catalyses the reaction N-terminal L-arginyl-[protein] + L-leucyl-tRNA(Leu) = N-terminal L-leucyl-L-arginyl-[protein] + tRNA(Leu) + H(+). It carries out the reaction L-phenylalanyl-tRNA(Phe) + an N-terminal L-alpha-aminoacyl-[protein] = an N-terminal L-phenylalanyl-L-alpha-aminoacyl-[protein] + tRNA(Phe). Functionally, functions in the N-end rule pathway of protein degradation where it conjugates Leu, Phe and, less efficiently, Met from aminoacyl-tRNAs to the N-termini of proteins containing an N-terminal arginine or lysine. The chain is Leucyl/phenylalanyl-tRNA--protein transferase from Hahella chejuensis (strain KCTC 2396).